The chain runs to 180 residues: MASSLMSNAITAVVGASGAQANMVAPFNGLKSIASFPVTRKSNDITSIASNGGRVQCMQVWPPVGKKKFETLSYLPPLSDAQLLAQVQYLLNNGWIPCIEFELEHPFVYRENHRSPGYQDGRYWTMWKLPMYGCTDPAQVLNEVEEAKKAYPSAFIRIIGFDNKRQVQCVSFIAFKPPGY.

Residues 1-56 (MASSLMSNAITAVVGASGAQANMVAPFNGLKSIASFPVTRKSNDITSIASNGGRVQ) constitute a chloroplast transit peptide.

This sequence belongs to the RuBisCO small chain family. Heterohexadecamer of 8 large and 8 small subunits.

The protein localises to the plastid. Its subcellular location is the chloroplast. In terms of biological role, ruBisCO catalyzes two reactions: the carboxylation of D-ribulose 1,5-bisphosphate, the primary event in carbon dioxide fixation, as well as the oxidative fragmentation of the pentose substrate. Both reactions occur simultaneously and in competition at the same active site. Although the small subunit is not catalytic it is essential for maximal activity. In Amaranthus hypochondriacus (Prince-of-Wales feather), this protein is Ribulose bisphosphate carboxylase small subunit, chloroplastic 3.